The chain runs to 361 residues: POU domain, class 3, transcription factor 4 (361 aa).

Disordered regions lie at residues 99-131 (PHVA…GQPL) and 144-192 (MLEH…PTSD). Residues 119–131 (APNSSITNSGQPL) show a composition bias toward polar residues. Basic and acidic residues predominate over residues 165–183 (VLREPPDHGELGSHHCQDH). One can recognise a POU-specific domain in the interval 186–260 (EETPTSDELE…LLNKWLEEAD (75 aa)). Serine 265 is modified (phosphoserine). A DNA-binding region (homeobox) is located at residues 278–337 (KRKKRTSIEVSVKGVLETHFLKCPKPAAQEISSLADSLQLEKEVVRVWFCNRRQKEKRMT). Residues 334–361 (KRMTPPGDQQPHEVYSHTVKTDASCHDL) are disordered. Residues 343 to 361 (QPHEVYSHTVKTDASCHDL) are compositionally biased toward basic and acidic residues.

Belongs to the POU transcription factor family. Class-3 subfamily.

It localises to the nucleus. Probable transcription factor which exert its primary action widely during early neural development and in a very limited set of neurons in the mature brain. This chain is POU domain, class 3, transcription factor 4 (Pou3f4), found in Mesocricetus auratus (Golden hamster).